Consider the following 227-residue polypeptide: Dephospho-CoA kinase (227 aa).

One can recognise a DPCK domain in the interval 31–227 (KIGLTGGIGS…EKLFQFINCL (197 aa)). Residue 39–44 (GSGKST) participates in ATP binding.

It belongs to the CoaE family.

The protein localises to the cytoplasm. The catalysed reaction is 3'-dephospho-CoA + ATP = ADP + CoA + H(+). Its pathway is cofactor biosynthesis; coenzyme A biosynthesis; CoA from (R)-pantothenate: step 5/5. Its function is as follows. Catalyzes the phosphorylation of the 3'-hydroxyl group of dephosphocoenzyme A to form coenzyme A. This chain is Dephospho-CoA kinase, found in Clostridium tetani (strain Massachusetts / E88).